The primary structure comprises 427 residues: UPF0229 protein YeaH (427 aa).

Residues 84–110 (QSDRIERPQGGGGGSGSGQGQASQDGE) are disordered. Positions 92–102 (QGGGGGSGSGQ) are enriched in gly residues.

It belongs to the UPF0229 family.

The protein is UPF0229 protein YeaH of Escherichia fergusonii (strain ATCC 35469 / DSM 13698 / CCUG 18766 / IAM 14443 / JCM 21226 / LMG 7866 / NBRC 102419 / NCTC 12128 / CDC 0568-73).